The primary structure comprises 445 residues: Exodeoxyribonuclease 7 large subunit (445 aa).

The protein belongs to the XseA family. As to quaternary structure, heterooligomer composed of large and small subunits.

Its subcellular location is the cytoplasm. It carries out the reaction Exonucleolytic cleavage in either 5'- to 3'- or 3'- to 5'-direction to yield nucleoside 5'-phosphates.. Bidirectionally degrades single-stranded DNA into large acid-insoluble oligonucleotides, which are then degraded further into small acid-soluble oligonucleotides. This Shewanella halifaxensis (strain HAW-EB4) protein is Exodeoxyribonuclease 7 large subunit.